The chain runs to 515 residues: Tetratricopeptide repeat protein 8 (515 aa).

A TPR 1 repeat occupies 4-37; that stretch reads EMEPLLRAWSYFRRRKFQLCADLCTQMLEKSPYD. 2 disordered regions span residues 89–109 and 118–137; these read RPGT…TQAV and PITG…TMEQ. TPR repeat units lie at residues 225 to 258, 259 to 291, 292 to 325, 326 to 359, 360 to 393, 397 to 430, and 432 to 464; these read WWWK…QEMV, DTFL…FPGE, VTLL…DNTH, VEAI…GVYN, CQLF…AENE, ADVW…NNHH, and EAYN…APHM.

As to quaternary structure, part of BBSome complex, that contains BBS1, BBS2, BBS4, BBS5, BBS7, BBS8/TTC8, BBS9 and BBIP10. Interacts with PCM1. Interacts with CCDC28B. Interacts with PKD1. In terms of tissue distribution, isoform 1 is retina-specific whereas isoform 2 is ubiquitously expressed.

It localises to the cytoplasm. The protein localises to the cytoskeleton. Its subcellular location is the microtubule organizing center. It is found in the centrosome. The protein resides in the centriole. It localises to the cell projection. The protein localises to the cilium membrane. Its subcellular location is the centriolar satellite. It is found in the cilium. The BBSome complex is thought to function as a coat complex required for sorting of specific membrane proteins to the primary cilia. The BBSome complex is required for ciliogenesis but is dispensable for centriolar satellite function. This ciliogenic function is mediated in part by the Rab8 GDP/GTP exchange factor, which localizes to the basal body and contacts the BBSome. Rab8(GTP) enters the primary cilium and promotes extension of the ciliary membrane. Firstly the BBSome associates with the ciliary membrane and binds to RAB3IP/Rabin8, the guanosyl exchange factor (GEF) for Rab8 and then the Rab8-GTP localizes to the cilium and promotes docking and fusion of carrier vesicles to the base of the ciliary membrane. The BBSome complex, together with the LTZL1, controls SMO ciliary trafficking and contributes to the sonic hedgehog (SHH) pathway regulation. Required for proper BBSome complex assembly and its ciliary localization. The chain is Tetratricopeptide repeat protein 8 (Ttc8) from Mus musculus (Mouse).